The chain runs to 463 residues: T-box transcription factor TBX1-B (463 aa).

Disordered stretches follow at residues 39–58 and 75–102; these read SPSPGDPYSQHEPHYEPCSA and GASSSSCASSTPGSGSTGSSSGNKAPVK. Residues 75 to 96 show a composition bias toward low complexity; the sequence is GASSSSCASSTPGSGSTGSSSG. A DNA-binding region (T-box) is located at residues 119–297; it reads LWDEFNQLGT…SNPFAKGFRD (179 aa). 2 disordered regions span residues 320–343 and 367–406; these read RSRNPVSSPPQNGSDKDGDGRREY and SPSLPVPGGLVPLSTGRPSPPHELRLDPHSQGSEPLHHHP. Positions 323-332 are enriched in polar residues; the sequence is NPVSSPPQNG. Over residues 333–343 the composition is skewed to basic and acidic residues; that stretch reads SDKDGDGRREY. Positions 367-380 are enriched in low complexity; the sequence is SPSLPVPGGLVPLS. The Nuclear localization signal signature appears at 420 to 431; the sequence is KTRPAPYPLPSI.

In terms of assembly, binds DNA as a dimer. Interacts with dscr6/ripply3.

It localises to the nucleus. Functionally, probable transcriptional regulator involved in developmental processes. Binds to the palindromic T site 5'-TTCACACCTAGGTGTGAA-3' DNA sequence. Induces pre-placodal ectoderm (PPE) gene expression in regions where RIPPLY3 is absent. Plays a role in the formation of the anteroposterior (AP) axis during embryonic development; required to establish the posterolateral border of the pre-placodal ectoderm (PPE) acting downstream of the retinoic acid receptor (RAR) signaling. Its function is as follows. Probable transcriptional regulator involved in developmental processes. Binds to the palindromic T site 5'-TTCACACCTAGGTGTGAA-3' DNA sequence. Is required for normal development of the pharyngeal arch arteries. The sequence is that of T-box transcription factor TBX1-B (tbx1-b) from Xenopus laevis (African clawed frog).